Reading from the N-terminus, the 174-residue chain is Streptothricin acetyltransferase (174 aa).

The region spanning 20-170 is the N-acetyltransferase domain; the sequence is FIVREVFDVH…AMYWYWFSGA (151 aa).

It belongs to the acetyltransferase family. GNAT subfamily.

It carries out the reaction streptothricin F + acetyl-CoA = N(beta)-acetylstreptothricin F + CoA + H(+). Involved in resistance to streptothricin, a broad-spectrum antibiotic produced by streptomycetes. Detoxifies streptothricin via acetylation of the beta amino group of the first beta-lysyl moiety of streptothricin. This chain is Streptothricin acetyltransferase (sat-1), found in Escherichia coli.